A 209-amino-acid polypeptide reads, in one-letter code: Large ribosomal subunit protein uL3 (209 aa).

Residues 128 to 166 (FGGGSRTHGQSDRLRAPGSVGGSSDPSRTFKGTRMAGRM) form a disordered region.

It belongs to the universal ribosomal protein uL3 family. In terms of assembly, part of the 50S ribosomal subunit. Forms a cluster with proteins L14 and L19.

In terms of biological role, one of the primary rRNA binding proteins, it binds directly near the 3'-end of the 23S rRNA, where it nucleates assembly of the 50S subunit. The sequence is that of Large ribosomal subunit protein uL3 from Chlorobaculum parvum (strain DSM 263 / NCIMB 8327) (Chlorobium vibrioforme subsp. thiosulfatophilum).